The sequence spans 102 residues: Urease subunit beta (102 aa).

Belongs to the urease beta subunit family. Heterotrimer of UreA (gamma), UreB (beta) and UreC (alpha) subunits. Three heterotrimers associate to form the active enzyme.

It localises to the cytoplasm. The enzyme catalyses urea + 2 H2O + H(+) = hydrogencarbonate + 2 NH4(+). It functions in the pathway nitrogen metabolism; urea degradation; CO(2) and NH(3) from urea (urease route): step 1/1. In Pseudomonas savastanoi pv. phaseolicola (strain 1448A / Race 6) (Pseudomonas syringae pv. phaseolicola (strain 1448A / Race 6)), this protein is Urease subunit beta.